Here is a 375-residue protein sequence, read N- to C-terminus: Carbamoyl phosphate synthase small chain (375 aa).

The interval 1–184 (MVSLYLENGL…LDYKPFDEKI (184 aa)) is CPSase. L-glutamine is bound by residues serine 44, glycine 240, and glycine 242. The region spanning 188–375 (IIAVLDFGAK…KEFVGLLEGF (188 aa)) is the Glutamine amidotransferase type-1 domain. Catalysis depends on cysteine 268, which acts as the Nucleophile. Positions 269, 272, 310, and 313 each coordinate L-glutamine. Residues histidine 351 and glutamate 353 contribute to the active site.

Belongs to the CarA family. Composed of two chains; the small (or glutamine) chain promotes the hydrolysis of glutamine to ammonia, which is used by the large (or ammonia) chain to synthesize carbamoyl phosphate. Tetramer of heterodimers (alpha,beta)4.

It carries out the reaction hydrogencarbonate + L-glutamine + 2 ATP + H2O = carbamoyl phosphate + L-glutamate + 2 ADP + phosphate + 2 H(+). It catalyses the reaction L-glutamine + H2O = L-glutamate + NH4(+). It participates in amino-acid biosynthesis; L-arginine biosynthesis; carbamoyl phosphate from bicarbonate: step 1/1. Its pathway is pyrimidine metabolism; UMP biosynthesis via de novo pathway; (S)-dihydroorotate from bicarbonate: step 1/3. Functionally, small subunit of the glutamine-dependent carbamoyl phosphate synthetase (CPSase). CPSase catalyzes the formation of carbamoyl phosphate from the ammonia moiety of glutamine, carbonate, and phosphate donated by ATP, constituting the first step of 2 biosynthetic pathways, one leading to arginine and/or urea and the other to pyrimidine nucleotides. The small subunit (glutamine amidotransferase) binds and cleaves glutamine to supply the large subunit with the substrate ammonia. The chain is Carbamoyl phosphate synthase small chain from Helicobacter pylori (strain J99 / ATCC 700824) (Campylobacter pylori J99).